The sequence spans 372 residues: Glutamate 5-kinase (372 aa).

Lys14 contributes to the ATP binding site. Substrate is bound by residues Ser54, Asp141, and Asn153. 173–174 (TD) provides a ligand contact to ATP. The 79-residue stretch at 280-358 (RGHVVIDAGA…GEIEAVLGYM (79 aa)) folds into the PUA domain.

It belongs to the glutamate 5-kinase family.

The protein resides in the cytoplasm. The catalysed reaction is L-glutamate + ATP = L-glutamyl 5-phosphate + ADP. The protein operates within amino-acid biosynthesis; L-proline biosynthesis; L-glutamate 5-semialdehyde from L-glutamate: step 1/2. Catalyzes the transfer of a phosphate group to glutamate to form L-glutamate 5-phosphate. In Burkholderia thailandensis (strain ATCC 700388 / DSM 13276 / CCUG 48851 / CIP 106301 / E264), this protein is Glutamate 5-kinase.